We begin with the raw amino-acid sequence, 341 residues long: MCSPSTSDVRFITFVNTTYIEAEGLEAIFDLLLKIEVGFLVFSWIEFLYLFYLFIFIRSMHFNLTFLFMNYGGQYFCSMLSRCIIVYQQLGNDPNNDLHNWILVANFARTVCLFIAMYILPIFMIERCLASFFVKNYEKSRKIWVSLMILSIFHPLVFASAIAYIQCWIPVVVHVISFFIVNIIGYIGIHICYSYNIKKHRKFYSPQCISRVTYGLSERFQLAENIKMCKVLKKVQISILFFNIGCCSILLMDHFQVKMMIIYWSYVCFNFFALVYGITVPIILYSALPEWQKETRRLLNLCIGRRNVGEEPKSTFGEQMIYNDHAIESNIYFTQFNKTTH.

Helical transmembrane passes span 37–57 (VGFL…FIFI), 64–86 (LTFL…CIIV), 101–123 (WILV…LPIF), 143–163 (IWVS…SAIA), 169–189 (IPVV…YIGI), 235–255 (VQIS…MDHF), and 264–284 (WSYV…PIIL).

The protein belongs to the nematode receptor-like protein sre family.

It localises to the membrane. The protein is Serpentine receptor class epsilon-8 (sre-8) of Caenorhabditis elegans.